The primary structure comprises 297 residues: 4-hydroxy-tetrahydrodipicolinate synthase (297 aa).

Residue T45 participates in pyruvate binding. The active-site Proton donor/acceptor is Y133. Residue K161 is the Schiff-base intermediate with substrate of the active site. I203 is a binding site for pyruvate.

This sequence belongs to the DapA family. As to quaternary structure, homotetramer; dimer of dimers.

It is found in the cytoplasm. It carries out the reaction L-aspartate 4-semialdehyde + pyruvate = (2S,4S)-4-hydroxy-2,3,4,5-tetrahydrodipicolinate + H2O + H(+). The protein operates within amino-acid biosynthesis; L-lysine biosynthesis via DAP pathway; (S)-tetrahydrodipicolinate from L-aspartate: step 3/4. Catalyzes the condensation of (S)-aspartate-beta-semialdehyde [(S)-ASA] and pyruvate to 4-hydroxy-tetrahydrodipicolinate (HTPA). The polypeptide is 4-hydroxy-tetrahydrodipicolinate synthase (Buchnera aphidicola subsp. Cinara cedri (strain Cc)).